Reading from the N-terminus, the 186-residue chain is NADH-quinone oxidoreductase subunit I (186 aa).

2 consecutive 4Fe-4S ferredoxin-type domains span residues 70-100 (LTTRADGKVQCVSCNMCATVCPAYCIEIQSA) and 113-142 (DRFEIDYSRCIFCGFCVEACPEDAIRMSKD). Cysteine 80, cysteine 83, cysteine 86, cysteine 90, cysteine 122, cysteine 125, cysteine 128, and cysteine 132 together coordinate [4Fe-4S] cluster.

The protein belongs to the complex I 23 kDa subunit family. As to quaternary structure, NDH-1 is composed of 14 different subunits. Subunits NuoA, H, J, K, L, M, N constitute the membrane sector of the complex. The cofactor is [4Fe-4S] cluster.

The protein localises to the cell inner membrane. The catalysed reaction is a quinone + NADH + 5 H(+)(in) = a quinol + NAD(+) + 4 H(+)(out). Functionally, NDH-1 shuttles electrons from NADH, via FMN and iron-sulfur (Fe-S) centers, to quinones in the respiratory chain. The immediate electron acceptor for the enzyme in this species is believed to be ubiquinone. Couples the redox reaction to proton translocation (for every two electrons transferred, four hydrogen ions are translocated across the cytoplasmic membrane), and thus conserves the redox energy in a proton gradient. The chain is NADH-quinone oxidoreductase subunit I from Pelobacter propionicus (strain DSM 2379 / NBRC 103807 / OttBd1).